The primary structure comprises 1017 residues: uncharacterized protein (1017 aa).

The tat-type signal signal peptide spans 1 to 34; that stretch reads MGNLTMSRRTFVKTAAITGAAAAAFGASTHTALA. The 59-residue stretch at 45–103 folds into the 4Fe-4S Mo/W bis-MGD-type domain; sequence DTVAVKTCCRGCGKMECGVKVIVQNGRAIRVEGDEGAFQSMGNCCTKSQSSIQAAYHPD. Residues C53, C56, C61, and C89 each coordinate [4Fe-4S] cluster. K91 acts as the Electron donor/acceptor in catalysis.

The protein belongs to the prokaryotic molybdopterin-containing oxidoreductase family. Requires [4Fe-4S] cluster as cofactor. Mo-bis(molybdopterin guanine dinucleotide) is required as a cofactor. In terms of processing, predicted to be exported by the Tat system. The position of the signal peptide cleavage has not been experimentally proven.

This is an uncharacterized protein from Eggerthella lenta (strain ATCC 25559 / DSM 2243 / CCUG 17323 / JCM 9979 / KCTC 3265 / NCTC 11813 / VPI 0255 / 1899 B) (Eubacterium lentum).